The sequence spans 369 residues: Anhydro-N-acetylmuramic acid kinase (369 aa).

12-19 (GTSMDGVD) serves as a coordination point for ATP.

This sequence belongs to the anhydro-N-acetylmuramic acid kinase family.

It catalyses the reaction 1,6-anhydro-N-acetyl-beta-muramate + ATP + H2O = N-acetyl-D-muramate 6-phosphate + ADP + H(+). It participates in amino-sugar metabolism; 1,6-anhydro-N-acetylmuramate degradation. Its pathway is cell wall biogenesis; peptidoglycan recycling. Its function is as follows. Catalyzes the specific phosphorylation of 1,6-anhydro-N-acetylmuramic acid (anhMurNAc) with the simultaneous cleavage of the 1,6-anhydro ring, generating MurNAc-6-P. Is required for the utilization of anhMurNAc either imported from the medium or derived from its own cell wall murein, and thus plays a role in cell wall recycling. The chain is Anhydro-N-acetylmuramic acid kinase from Shewanella amazonensis (strain ATCC BAA-1098 / SB2B).